A 338-amino-acid polypeptide reads, in one-letter code: Methionine synthase (338 aa).

Zn(2+) contacts are provided by His210, Cys212, Glu234, and Cys294.

The protein belongs to the archaeal MetE family. It depends on Zn(2+) as a cofactor.

It functions in the pathway amino-acid biosynthesis; L-methionine biosynthesis via de novo pathway. Catalyzes the transfer of a methyl group to L-homocysteine resulting in methionine formation. The physiological methyl donor is unknown. In Pyrococcus abyssi (strain GE5 / Orsay), this protein is Methionine synthase.